Reading from the N-terminus, the 208-residue chain is Type 4 adapter protein LvgA (208 aa).

As to quaternary structure, the T4BSS is a complex nanomachine composed of several subcomplexes. This subunit is part of the Type IV Coupling Complex (T4CC), a subcomplex composed of the DotLMNYZ core and the IcmSW-LvgA adapter subunits, linked by the C-terminal tail of DotL. Interacts with DotL, IcmS and IcmW. Interacts with various effector proteins, including VpdB, SetA, PieA and SidH.

It is found in the cytoplasm. Functionally, component of the Dot/Icm type IVB secretion system (T4BSS), which is used to inject bacterial effector proteins into eukaryotic host cells. Part of a subcomplex which recruits effector proteins and delivers them to the core transmembrane subcomplex. Is a critical subunit for binding a subset of effector proteins. Recognizes more than one type of binding motif. May be a critical factor that confers host specificity. The protein is Type 4 adapter protein LvgA of Legionella pneumophila subsp. pneumophila (strain Philadelphia 1 / ATCC 33152 / DSM 7513).